Consider the following 500-residue polypeptide: Glycerol kinase (500 aa).

T14 contributes to the ADP binding site. T14, T15, and S16 together coordinate ATP. Residue T14 participates in sn-glycerol 3-phosphate binding. R18 is an ADP binding site. Positions 84, 85, and 136 each coordinate sn-glycerol 3-phosphate. Glycerol contacts are provided by R84, E85, and Y136. H232 is modified (phosphohistidine; by HPr). Position 246 (D246) interacts with sn-glycerol 3-phosphate. The glycerol site is built by D246 and Q247. ADP is bound by residues T268 and G311. The ATP site is built by T268, G311, Q315, and G412. ADP contacts are provided by G412 and N416.

It belongs to the FGGY kinase family. Homotetramer and homodimer (in equilibrium). In terms of processing, the phosphoenolpyruvate-dependent sugar phosphotransferase system (PTS), including enzyme I, and histidine-containing protein (HPr) are required for the phosphorylation, which leads to the activation of the enzyme.

The enzyme catalyses glycerol + ATP = sn-glycerol 3-phosphate + ADP + H(+). It functions in the pathway polyol metabolism; glycerol degradation via glycerol kinase pathway; sn-glycerol 3-phosphate from glycerol: step 1/1. Activated by phosphorylation and inhibited by fructose 1,6-bisphosphate (FBP). Key enzyme in the regulation of glycerol uptake and metabolism. Catalyzes the phosphorylation of glycerol to yield sn-glycerol 3-phosphate. The polypeptide is Glycerol kinase (Limosilactobacillus reuteri (strain DSM 20016) (Lactobacillus reuteri)).